The following is a 202-amino-acid chain: MSRYRGPRLRITRRLGDLPGLTRKAAKRSYPPGQHGQARRKRSEYAIRLEEKQKLRFNYGVSERQLVRYVKKARAQEGSTGTNLLKLLESRLDNICFRLGFGPTVPGSRQLVNHGHVTVNGRVTDIASYQVKPGDVLAIREKKGSKQLAEGNLAFPGLSNIPPHLELDKAKLSAKCTGRCEREWVALEINELLVVEYYSRKV.

Residues 15–42 (LGDLPGLTRKAAKRSYPPGQHGQARRKR) form a disordered region. The S4 RNA-binding domain occupies 90 to 152 (SRLDNICFRL…KGSKQLAEGN (63 aa)).

Belongs to the universal ribosomal protein uS4 family. Part of the 30S ribosomal subunit. Contacts protein S5. The interaction surface between S4 and S5 is involved in control of translational fidelity.

Its function is as follows. One of the primary rRNA binding proteins, it binds directly to 16S rRNA where it nucleates assembly of the body of the 30S subunit. In terms of biological role, with S5 and S12 plays an important role in translational accuracy. In Synechococcus sp. (strain CC9902), this protein is Small ribosomal subunit protein uS4.